A 102-amino-acid chain; its full sequence is Large ribosomal subunit protein uL23 (102 aa).

It belongs to the universal ribosomal protein uL23 family. In terms of assembly, part of the 50S ribosomal subunit. Contacts protein L29, and trigger factor when it is bound to the ribosome.

In terms of biological role, one of the early assembly proteins it binds 23S rRNA. One of the proteins that surrounds the polypeptide exit tunnel on the outside of the ribosome. Forms the main docking site for trigger factor binding to the ribosome. The sequence is that of Large ribosomal subunit protein uL23 from Paramagnetospirillum magneticum (strain ATCC 700264 / AMB-1) (Magnetospirillum magneticum).